Consider the following 703-residue polypeptide: Histone-lysine N-methyltransferase SETDB2 (703 aa).

The region spanning 178-248 (FTKGNPLQLP…DNFSFNNHVR (71 aa)) is the MBD domain. The Pre-SET domain maps to 310–384 (KCCNCTDGCL…LCQNRVVQHG (75 aa)). 9 residues coordinate Zn(2+): Cys312, Cys314, Cys318, Cys324, Cys326, Cys365, Cys369, Cys371, and Cys376. The 292-residue stretch at 387-678 (LRLQVFKTNT…AGTELTWDYS (292 aa)) folds into the SET domain. 397–399 (KGW) contributes to the S-adenosyl-L-methionine binding site. The segment at 492–588 (TFSPRQARSG…SSSVISGGHP (97 aa)) is disordered. Basic residues predominate over residues 511–525 (RRPKTKTSMLQKRRR). The span at 550–560 (PEQKSSAGTKI) shows a compositional bias: polar residues. Positions 571 to 586 (SGYVSEESSSSVISGG) are enriched in low complexity. S-adenosyl-L-methionine-binding positions include Arg632 and 635–636 (NH). Cys638, Cys691, Cys693, and Cys698 together coordinate Zn(2+).

This sequence belongs to the class V-like SAM-binding methyltransferase superfamily.

The protein localises to the nucleus. Its subcellular location is the chromosome. The catalysed reaction is N(6),N(6)-dimethyl-L-lysyl(9)-[histone H3] + S-adenosyl-L-methionine = N(6),N(6),N(6)-trimethyl-L-lysyl(9)-[histone H3] + S-adenosyl-L-homocysteine + H(+). Histone methyltransferase involved in left-right axis specification in early development and mitosis. Specifically trimethylates 'Lys-9' of histone H3 (H3K9me3). H3K9me3 is a specific tag for epigenetic transcriptional repression that recruits HP1 (CBX1, CBX3 and/or CBX5) proteins to methylated histones. Contributes to H3K9me3 in both the interspersed repetitive elements and centromere-associated repeats. Plays a role in chromosome condensation and segregation during mitosis. This chain is Histone-lysine N-methyltransferase SETDB2 (setdb2), found in Xenopus laevis (African clawed frog).